The chain runs to 303 residues: Trans-enoyl reductase tazE (303 aa).

The segment at 1 to 26 (MTAEHDAAILPKPGGPLAVGKRATPE) is disordered. An NADP(+)-binding site is contributed by 44–49 (CDYYQR). Residue 136-143 (LAVLTALT) coordinates substrate. Residues 170–173 (SSSV), 193–196 (SPKH), Tyr211, and 246–247 (LD) contribute to the NADP(+) site. 265–269 (VLPEC) serves as a coordination point for substrate.

The protein belongs to the zinc-containing alcohol dehydrogenase family.

Its pathway is secondary metabolite biosynthesis. Functionally, trans-enoyl reductase; part of the gene cluster that mediates the biosynthesis of azaterrilone A and other azaphilones, a class of fungal metabolites characterized by a highly oxygenated pyrano-quinone bicyclic core and exhibiting a broad range of bioactivities. The first step of the pathway begins with the non-reducing polyketide synthase tazA that assembles one acetyl-CoA starter unit, five malonyl-CoA units, and catalyzes a series of Claisen condensations, methylation, PT-mediated cyclization, and finally releases the first hexaketide precursor through the R-domain. The tazA product then undergoes reduction on its terminal ketone and the following pyran-ring formation by yet undetermined enzyme(s). Dehydration and enoyl reduction, possibly involving the trans-enoyl reductase tazE leads to the next intermediate. TazD is predicted as an acetyltransferase and might catalyze the acetylation steps leading to the synthesis of azaterrilone A. Azaterrilone A is not the final product of the taz pathway and both the highly reducing polyketide synthase tazB and the dual enzyme tazHJ catalyze late steps of the pathway, leading to the production of the 2 final stereoisomers that contain additional polyketide modification whose structures have still to be determined. The protein is Trans-enoyl reductase tazE of Aspergillus terreus (strain NIH 2624 / FGSC A1156).